A 206-amino-acid chain; its full sequence is Protein sym1 (206 aa).

The next 2 membrane-spanning stretches (helical) occupy residues 107 to 127 and 169 to 189; these read VLLD…SWMT and LQYQ…FLSL.

This sequence belongs to the peroxisomal membrane protein PXMP2/4 family.

Its subcellular location is the mitochondrion inner membrane. This chain is Protein sym1 (sym1), found in Schizosaccharomyces pombe (strain 972 / ATCC 24843) (Fission yeast).